Reading from the N-terminus, the 425-residue chain is Rho GTPase-activating protein 8 (425 aa).

Residues 13–168 form the CRAL-TRIO domain; sequence PFYDVARHGI…EVVRYDEKLQ (156 aa). The disordered stretch occupies residues 169-192; sequence NLHKGQPPPPTKTPPPRPPLPTQQ. The span at 174–189 shows a compositional bias: pro residues; that stretch reads QPPPPTKTPPPRPPLP. The 187-residue stretch at 195–381 folds into the Rho-GAP domain; that stretch reads VSLQYLRDKN…LLIEYYDKVF (187 aa).

Highly expressed in skeletal muscle, lung and testis, and at lower levels in kidney, stomach and colon. Not detected in heart, liver, spleen, breast, brain, neonatal head or pancreas.

In terms of biological role, GTPase activator for the Rho-type GTPases by converting them to an inactive GDP-bound state. The protein is Rho GTPase-activating protein 8 (Arhgap8) of Mus musculus (Mouse).